A 293-amino-acid chain; its full sequence is Signal recognition particle receptor FtsY (293 aa).

GTP-binding positions include 93-100, 175-179, and 239-242; these read GVNGAGKT, DTAGR, and TKLD.

It belongs to the GTP-binding SRP family. FtsY subfamily. As to quaternary structure, part of the signal recognition particle protein translocation system, which is composed of SRP and FtsY. SRP is a ribonucleoprotein composed of Ffh and a 4.5S RNA molecule.

The protein resides in the cell inner membrane. It localises to the cytoplasm. The catalysed reaction is GTP + H2O = GDP + phosphate + H(+). Its function is as follows. Involved in targeting and insertion of nascent membrane proteins into the cytoplasmic membrane. Acts as a receptor for the complex formed by the signal recognition particle (SRP) and the ribosome-nascent chain (RNC). Interaction with SRP-RNC leads to the transfer of the RNC complex to the Sec translocase for insertion into the membrane, the hydrolysis of GTP by both Ffh and FtsY, and the dissociation of the SRP-FtsY complex into the individual components. This chain is Signal recognition particle receptor FtsY, found in Helicobacter pylori (strain ATCC 700392 / 26695) (Campylobacter pylori).